Consider the following 157-residue polypeptide: Small ribosomal subunit protein uS7 (157 aa).

The protein belongs to the universal ribosomal protein uS7 family. As to quaternary structure, part of the 30S ribosomal subunit. Contacts proteins S9 and S11.

Functionally, one of the primary rRNA binding proteins, it binds directly to 16S rRNA where it nucleates assembly of the head domain of the 30S subunit. Is located at the subunit interface close to the decoding center, probably blocks exit of the E-site tRNA. This is Small ribosomal subunit protein uS7 from Verminephrobacter eiseniae (strain EF01-2).